The chain runs to 1376 residues: Mediator of RNA polymerase II transcription subunit 23 (1376 aa).

A compositionally biased stretch (low complexity) spans 1346–1369 (SNSSSVQQTSSASSPTAQSTAGAA). Residues 1346–1376 (SNSSSVQQTSSASSPTAQSTAGAAIPLSVTQ) form a disordered region.

This sequence belongs to the Mediator complex subunit 23 family. In terms of assembly, component of the Mediator complex.

The protein resides in the nucleus. In terms of biological role, component of the Mediator complex, a coactivator involved in the regulated transcription of nearly all RNA polymerase II-dependent genes. Mediator functions as a bridge to convey information from gene-specific regulatory proteins to the basal RNA polymerase II transcription machinery. Mediator is recruited to promoters by direct interactions with regulatory proteins and serves as a scaffold for the assembly of a functional preinitiation complex with RNA polymerase II and the general transcription factors. In Danio rerio (Zebrafish), this protein is Mediator of RNA polymerase II transcription subunit 23 (med23).